Reading from the N-terminus, the 243-residue chain is MNAPDGLQRCFVLHRRPYSESSLILDIFSEEFGRITLMSKGARSKRSNLKGALQPFTPLLLKWSGKGAMKTLRQAEPISLGLPLTGINLYSALYVNELIGRVLMQEVSMPGLFHDYLFALTELAQADNPEPALRRFELALLAAMGYGVDFLHCAGTGEPIDPQMTYRYREQKGFIASVRRDNLTFLGNELIAISERRFLTKEQLQAAKRFTRIALKPYLGGKPLKSRELFIQMRIPRTRSMEK.

The protein belongs to the RecO family.

Involved in DNA repair and RecF pathway recombination. This chain is DNA repair protein RecO, found in Vibrio vulnificus (strain CMCP6).